The primary structure comprises 96 residues: Mitochondrial import inner membrane translocase subunit Tim13-A (96 aa).

Positions 47 to 70 (CFRKCIGKPGGSLDNSEQKCIAMC) match the Twin CX3C motif motif. 2 disulfides stabilise this stretch: Cys47–Cys70 and Cys51–Cys66.

The protein belongs to the small Tim family. Heterohexamer; composed of 3 copies of TIMM8 (TIMM8A or TIMM8B) and 3 copies of TIMM13, named soluble 70 kDa complex. Associates with the TIM22 complex, whose core is composed of TIMM22.

The protein resides in the mitochondrion inner membrane. Functionally, mitochondrial intermembrane chaperone that participates in the import and insertion of some multi-pass transmembrane proteins into the mitochondrial inner membrane. Also required for the transfer of beta-barrel precursors from the TOM complex to the sorting and assembly machinery (SAM complex) of the outer membrane. Acts as a chaperone-like protein that protects the hydrophobic precursors from aggregation and guide them through the mitochondrial intermembrane space. The TIMM8-TIMM13 complex mediates the import of some proteins while the predominant TIMM9-TIMM10 70 kDa complex mediates the import of much more proteins. This chain is Mitochondrial import inner membrane translocase subunit Tim13-A (timm13-a), found in Xenopus laevis (African clawed frog).